The sequence spans 331 residues: Ribosomal RNA small subunit methyltransferase H (331 aa).

Residues 56 to 58 (GGH), D76, F100, D122, and Q129 each bind S-adenosyl-L-methionine.

The protein belongs to the methyltransferase superfamily. RsmH family.

The protein localises to the cytoplasm. The enzyme catalyses cytidine(1402) in 16S rRNA + S-adenosyl-L-methionine = N(4)-methylcytidine(1402) in 16S rRNA + S-adenosyl-L-homocysteine + H(+). Specifically methylates the N4 position of cytidine in position 1402 (C1402) of 16S rRNA. The chain is Ribosomal RNA small subunit methyltransferase H from Chromohalobacter salexigens (strain ATCC BAA-138 / DSM 3043 / CIP 106854 / NCIMB 13768 / 1H11).